An 86-amino-acid polypeptide reads, in one-letter code: Cell division topological specificity factor (86 aa).

The protein belongs to the MinE family.

In terms of biological role, prevents the cell division inhibition by proteins MinC and MinD at internal division sites while permitting inhibition at polar sites. This ensures cell division at the proper site by restricting the formation of a division septum at the midpoint of the long axis of the cell. This Shewanella woodyi (strain ATCC 51908 / MS32) protein is Cell division topological specificity factor.